The primary structure comprises 113 residues: Large ribosomal subunit protein bL19 (113 aa).

It belongs to the bacterial ribosomal protein bL19 family.

Its function is as follows. This protein is located at the 30S-50S ribosomal subunit interface and may play a role in the structure and function of the aminoacyl-tRNA binding site. This is Large ribosomal subunit protein bL19 from Mycobacterium leprae (strain Br4923).